The sequence spans 210 residues: Ribosomal RNA large subunit methyltransferase E (210 aa).

Positions 67, 69, 87, 103, and 128 each coordinate S-adenosyl-L-methionine. Lys168 functions as the Proton acceptor in the catalytic mechanism.

It belongs to the class I-like SAM-binding methyltransferase superfamily. RNA methyltransferase RlmE family.

The protein resides in the cytoplasm. The enzyme catalyses uridine(2552) in 23S rRNA + S-adenosyl-L-methionine = 2'-O-methyluridine(2552) in 23S rRNA + S-adenosyl-L-homocysteine + H(+). In terms of biological role, specifically methylates the uridine in position 2552 of 23S rRNA at the 2'-O position of the ribose in the fully assembled 50S ribosomal subunit. This Psychrobacter cryohalolentis (strain ATCC BAA-1226 / DSM 17306 / VKM B-2378 / K5) protein is Ribosomal RNA large subunit methyltransferase E.